A 182-amino-acid chain; its full sequence is Dual-action ribosomal maturation protein DarP (182 aa).

It belongs to the DarP family.

Its subcellular location is the cytoplasm. Member of a network of 50S ribosomal subunit biogenesis factors which assembles along the 30S-50S interface, preventing incorrect 23S rRNA structures from forming. Promotes peptidyl transferase center (PTC) maturation. The polypeptide is Dual-action ribosomal maturation protein DarP (Yersinia pseudotuberculosis serotype O:1b (strain IP 31758)).